Reading from the N-terminus, the 91-residue chain is Putative 26S proteasome complex subunit sem-1 (91 aa).

A disordered region spans residues 1 to 73 (MASTQPKNDA…SWDDDDTSDD (73 aa)). Positions 8 to 28 (NDAKSTEPKPEQPVTEKKTAV) are enriched in basic and acidic residues. Composition is skewed to acidic residues over residues 29–48 (LEED…AEDT) and 63–72 (ESWDDDDTSD).

The protein belongs to the DSS1/SEM1 family. As to quaternary structure, part of the 26S proteasome.

Its function is as follows. Subunit of the 26S proteasome which plays a role in ubiquitin-dependent proteolysis. This is Putative 26S proteasome complex subunit sem-1 (sem-1) from Neurospora crassa (strain ATCC 24698 / 74-OR23-1A / CBS 708.71 / DSM 1257 / FGSC 987).